The sequence spans 349 residues: Homeobox-leucine zipper protein HOX5 (349 aa).

The segment at residues 83–142 (APEKKRRLTAEQVQMLERSFEEENKLEPERKTELARRLGMAPRQVAVWFQNRRARWKTKQ) is a DNA-binding region (homeobox). The interval 141 to 185 (KQLEHDFDRLKAAYDALAADHHALLSDNDRLRAQVISLTEKLQDK) is leucine-zipper. The interval 181–253 (KLQDKETSPS…GTNDDGDGGA (73 aa)) is disordered. A compositionally biased stretch (low complexity) spans 188 to 198 (SPSSATITTAA).

It belongs to the HD-ZIP homeobox family. Class I subfamily. Homodimer. May form a heterodimer with HOX4. As to expression, expressed in seedlings, roots, leaves, nodes, internodes, flowers and embryo.

Its subcellular location is the nucleus. Functionally, probable transcription activator that binds to the DNA sequence 5'-CAAT[AT]ATTG-3'. The chain is Homeobox-leucine zipper protein HOX5 (HOX5) from Oryza sativa subsp. japonica (Rice).